Reading from the N-terminus, the 504-residue chain is Protoporphyrinogen oxidase, mitochondrial (504 aa).

FAD contacts are provided by residues 20–25 (GAGVSG), 43–44 (EA), K51, and 65–68 (GANT). Positions 213–232 (SPKNEKKQGPPKTSANKKRQ) are disordered. Residues V264 and 473–475 (LSV) each bind FAD.

The protein belongs to the protoporphyrinogen/coproporphyrinogen oxidase family. Protoporphyrinogen oxidase subfamily. It depends on FAD as a cofactor.

Its subcellular location is the mitochondrion. It catalyses the reaction protoporphyrinogen IX + 3 O2 = protoporphyrin IX + 3 H2O2. The protein operates within porphyrin-containing compound metabolism; protoporphyrin-IX biosynthesis; protoporphyrin-IX from protoporphyrinogen-IX: step 1/1. Its activity is regulated as follows. Inhibited by the herbicide acifluorfen. Functionally, catalyzes the 6-electron oxidation of protoporphyrinogen-IX to form protoporphyrin-IX. In terms of biological role, provides precursor for the mitochondrial and plastidic heme synthesis and the predominant chlorophyll synthesis in plastids. In Nicotiana tabacum (Common tobacco), this protein is Protoporphyrinogen oxidase, mitochondrial (PPXII).